A 489-amino-acid chain; its full sequence is Mitochondrial distribution and morphology protein 34 (489 aa).

Residues 1 to 205 (MSFNINWDSI…LPSVLYKFSQ (205 aa)) enclose the SMP-LTD domain.

The protein belongs to the MDM34 family. In terms of assembly, component of the ER-mitochondria encounter structure (ERMES) or MDM complex, composed of MMM1, MDM10, MDM12 and MDM34.

The protein localises to the mitochondrion outer membrane. Functionally, component of the ERMES/MDM complex, which serves as a molecular tether to connect the endoplasmic reticulum (ER) and mitochondria. Components of this complex are involved in the control of mitochondrial shape and protein biogenesis, and function in nonvesicular lipid trafficking between the ER and mitochondria. MDM34 is required for the interaction of the ER-resident membrane protein MMM1 and the outer mitochondrial membrane-resident beta-barrel protein MDM10. The chain is Mitochondrial distribution and morphology protein 34 from Komagataella phaffii (strain GS115 / ATCC 20864) (Yeast).